A 107-amino-acid polypeptide reads, in one-letter code: Serine palmitoyltransferase-regulating protein TSC3 (107 aa).

Residues 72–92 (VFFLVVFTLSLFGLLKWVLSL) form a helical membrane-spanning segment.

The protein localises to the endoplasmic reticulum membrane. Its function is as follows. Stimulates the activity of serine palmitoyltransferase (SPT). This chain is Serine palmitoyltransferase-regulating protein TSC3 (TSC3), found in Eremothecium gossypii (strain ATCC 10895 / CBS 109.51 / FGSC 9923 / NRRL Y-1056) (Yeast).